Here is a 60-residue protein sequence, read N- to C-terminus: Homeobox protein engrailed-like (60 aa).

The segment at residues 1–41 (GEQLCRLRAEFQASRYLTEERRTALARELRLNEAQIKIWFQ) is a DNA-binding region (homeobox).

This sequence belongs to the engrailed homeobox family.

The protein resides in the nucleus. The polypeptide is Homeobox protein engrailed-like (Lampetra planeri (Brook lamprey)).